Reading from the N-terminus, the 326-residue chain is Porin-like protein H (326 aa).

Residues 1-19 form the signal peptide; that stretch reads MKKTLVALAILTAAGSANA.

This sequence belongs to the Gram-negative porin family. Oligomer.

It is found in the cell outer membrane. Its function is as follows. Forms pores that allow passive diffusion of small molecules across the outer membrane. This chain is Porin-like protein H (ompH), found in Photobacterium profundum (strain SS9).